Consider the following 635-residue polypeptide: Allantoin permease (635 aa).

The Cytoplasmic segment spans residues 1 to 144 (MANDALSAIF…AGTGLQLGLN (144 aa)). The chain crosses the membrane as a helical span at residues 145-165 (WWQCWLTVWIGYTFAGIFVVL). Residues 166-174 (NSRFGSAYH) lie on the Extracellular side of the membrane. The chain crosses the membrane as a helical span at residues 175–195 (LSFPITVRASFGIFFSMWPII). At 196–198 (NRV) the chain is on the cytoplasmic side. Residues 199–219 (VMAIVWYAVQAWLGATPVALM) form a helical membrane-spanning segment. Over 220-243 (LKSIFGKNLEDRIPNHFGSPNSTT) the chain is Extracellular. A helical membrane pass occupies residues 244–264 (FEFMCFFIFWVVSIPFVLVAP). Residues 265–269 (HKIRH) are Cytoplasmic-facing. The chain crosses the membrane as a helical span at residues 270–290 (LFTVKAALIPFAAFGFLIWAL). The Extracellular segment spans residues 291–311 (KKSHGKIELGTLNDYSPHGSE). Residues 312 to 332 (FSWIFVRSLMACVANFAALII) traverse the membrane as a helical segment. Residues 333 to 351 (NAPDFGRFAKNPQASLWPQ) lie on the Cytoplasmic side of the membrane. The helical transmembrane segment at 352 to 372 (LVAIPLFFAITCLIGIIVTAA) threads the bilayer. The Extracellular segment spans residues 373 to 401 (GYHLYGVNYWSPLDVLGQFLETTYTRGTR). A helical transmembrane segment spans residues 402-422 (AGVFLISFVFALAQLGTNISA). Residues 423–443 (NSLACGADMTALFPRYINIRR) are Cytoplasmic-facing. A helical transmembrane segment spans residues 444 to 464 (GSLFCVAMALCICPWNLMASS). Topologically, residues 465-466 (SK) are extracellular. Residues 467–487 (FTSALGAYAIFLSSIAGVICA) form a helical membrane-spanning segment. The Cytoplasmic segment spans residues 488-522 (DYFVVRRGYVKLTHLFLAQKGSFYMFGNKFGANWR). The helical transmembrane segment at 523 to 543 (AFVAYICGIAPNLPGFIGDVG) threads the bilayer. Over 544-560 (APKITVSEGAMRLYYLG) the chain is Extracellular. A helical membrane pass occupies residues 561 to 581 (YPVGFFISAVIYLILCYFFPV). The Cytoplasmic portion of the chain corresponds to 582–635 (PGTPVTNFLTEKGWFQRWAYVEDFEQDWKNELRRDDLCDDTVSIYDGTEEKIVY).

Belongs to the purine-cytosine permease (2.A.39) family.

It is found in the membrane. Its function is as follows. Transport of allantoin. This is Allantoin permease (DAL4) from Saccharomyces cerevisiae (strain ATCC 204508 / S288c) (Baker's yeast).